The following is a 98-amino-acid chain: Small ribosomal subunit protein bS20 (98 aa).

The protein belongs to the bacterial ribosomal protein bS20 family.

In terms of biological role, binds directly to 16S ribosomal RNA. The protein is Small ribosomal subunit protein bS20 of Synechococcus sp. (strain CC9902).